A 375-amino-acid chain; its full sequence is MAKMINKTLVLTYIYLLIYIILSSGVILYNKWVLSPKYFNFPLPITLTMIHMGFAGFVAFLLIRVFKVVAPVKMTFEIYATCVVPISAFFASSLWFGNTAYLHISVAFIQMLKALMPVATFIMAVVCGTDKPRCDVFSNMLLVSVGVVISSYGEIHFNIVGTVYQVTGIFAEALRLVLTQVLLQKKGLTLNPITSLYYIAPCSFVFLALPWYVLEKPTMEVSQIQFNFWIFFSNALCALALNFSIFLVIGRTGAVTIRVAGVLKDWILIALSTVIFPESTITGLNITGYAIALCGVVMYNYIKVRDVKASQPTADSLPDRINKEYKMEKKSSDKFNPNDSVEIPRVGGEVNDEEAPLITSRLSHIGRTQLGNHAA.

10 consecutive transmembrane segments (helical) span residues 9–29 (LVLT…VILY), 43–63 (LPIT…FLLI), 76–96 (FEIY…SLWF), 106–126 (VAFI…MAVV), 140–160 (MLLV…FNIV), 163–183 (VYQV…QVLL), 193–213 (ITSL…PWYV), 229–249 (WIFF…FLVI), 257–276 (IRVA…TVIF), and 280–302 (TITG…YNYI). Residues 328–348 (EKKSSDKFNPNDSVEIPRVGG) form a disordered region.

Belongs to the TPT transporter family. TPT (TC 2.A.7.9) subfamily.

It localises to the membrane. The sequence is that of Probable sugar phosphate/phosphate translocator At3g17430 from Arabidopsis thaliana (Mouse-ear cress).